A 192-amino-acid polypeptide reads, in one-letter code: Der GTPase-activating protein YihI (192 aa).

Positions 1 to 12 (MSAKQPNRKPAG) are enriched in basic residues. Disordered stretches follow at residues 1–87 (MSAK…IKEK) and 145–192 (DTDD…PKKK). A compositionally biased stretch (basic and acidic residues) spans 13 to 26 (KRKESDASAQEGRE). The span at 27-36 (RKRAAKRKGL) shows a compositional bias: basic residues. Acidic residues predominate over residues 145–172 (DTDDDEDEADFDEADFDEPGQPASEEEL). Residues 183-192 (PEPKPEPKKK) are compositionally biased toward basic and acidic residues.

The protein belongs to the YihI family. In terms of assembly, interacts with Der.

Its function is as follows. A GTPase-activating protein (GAP) that modifies Der/EngA GTPase function. May play a role in ribosome biogenesis. This is Der GTPase-activating protein YihI from Aeromonas hydrophila subsp. hydrophila (strain ATCC 7966 / DSM 30187 / BCRC 13018 / CCUG 14551 / JCM 1027 / KCTC 2358 / NCIMB 9240 / NCTC 8049).